A 347-amino-acid chain; its full sequence is Eukaryotic translation initiation factor 3 subunit I (347 aa).

WD repeat units follow at residues 8–47 (GHER…RLGT), 50–89 (GHTG…VIHT), 91–135 (TAPV…VTKE), 151–190 (ENHK…FITS), 193–232 (LHTQ…QLKS), and 290–329 (GHFG…FDFK).

This sequence belongs to the eIF-3 subunit I family. In terms of assembly, component of the eukaryotic translation initiation factor 3 (eIF-3) complex.

It localises to the cytoplasm. Component of the eukaryotic translation initiation factor 3 (eIF-3) complex, which is involved in protein synthesis of a specialized repertoire of mRNAs and, together with other initiation factors, stimulates binding of mRNA and methionyl-tRNAi to the 40S ribosome. The eIF-3 complex specifically targets and initiates translation of a subset of mRNAs involved in cell proliferation. This chain is Eukaryotic translation initiation factor 3 subunit I, found in Vanderwaltozyma polyspora (strain ATCC 22028 / DSM 70294 / BCRC 21397 / CBS 2163 / NBRC 10782 / NRRL Y-8283 / UCD 57-17) (Kluyveromyces polysporus).